A 329-amino-acid polypeptide reads, in one-letter code: GTP 3',8-cyclase (329 aa).

In terms of domain architecture, Radical SAM core spans 8-234 (AFARKFYYLR…QQRARSDGPA (227 aa)). Position 17 (R17) interacts with GTP. [4Fe-4S] cluster contacts are provided by C24 and C28. Y30 lines the S-adenosyl-L-methionine pocket. Residue C31 participates in [4Fe-4S] cluster binding. R68 lines the GTP pocket. G72 is an S-adenosyl-L-methionine binding site. A GTP-binding site is contributed by T99. S123 contacts S-adenosyl-L-methionine. K160 serves as a coordination point for GTP. S-adenosyl-L-methionine is bound at residue M194. The [4Fe-4S] cluster site is built by C257 and C260. 262-264 (RLR) contacts GTP. C274 provides a ligand contact to [4Fe-4S] cluster.

This sequence belongs to the radical SAM superfamily. MoaA family. In terms of assembly, monomer and homodimer. It depends on [4Fe-4S] cluster as a cofactor.

The catalysed reaction is GTP + AH2 + S-adenosyl-L-methionine = (8S)-3',8-cyclo-7,8-dihydroguanosine 5'-triphosphate + 5'-deoxyadenosine + L-methionine + A + H(+). It participates in cofactor biosynthesis; molybdopterin biosynthesis. Functionally, catalyzes the cyclization of GTP to (8S)-3',8-cyclo-7,8-dihydroguanosine 5'-triphosphate. This Pectobacterium atrosepticum (strain SCRI 1043 / ATCC BAA-672) (Erwinia carotovora subsp. atroseptica) protein is GTP 3',8-cyclase.